Reading from the N-terminus, the 409-residue chain is Arginine biosynthesis bifunctional protein ArgJ (409 aa).

Substrate-binding residues include threonine 157, lysine 183, threonine 194, glutamate 281, asparagine 404, and serine 409. Threonine 194 serves as the catalytic Nucleophile.

Belongs to the ArgJ family. In terms of assembly, heterotetramer of two alpha and two beta chains.

The protein localises to the cytoplasm. The catalysed reaction is N(2)-acetyl-L-ornithine + L-glutamate = N-acetyl-L-glutamate + L-ornithine. The enzyme catalyses L-glutamate + acetyl-CoA = N-acetyl-L-glutamate + CoA + H(+). Its pathway is amino-acid biosynthesis; L-arginine biosynthesis; L-ornithine and N-acetyl-L-glutamate from L-glutamate and N(2)-acetyl-L-ornithine (cyclic): step 1/1. The protein operates within amino-acid biosynthesis; L-arginine biosynthesis; N(2)-acetyl-L-ornithine from L-glutamate: step 1/4. Catalyzes two activities which are involved in the cyclic version of arginine biosynthesis: the synthesis of N-acetylglutamate from glutamate and acetyl-CoA as the acetyl donor, and of ornithine by transacetylation between N(2)-acetylornithine and glutamate. This chain is Arginine biosynthesis bifunctional protein ArgJ, found in Zymomonas mobilis subsp. mobilis (strain ATCC 31821 / ZM4 / CP4).